A 107-amino-acid polypeptide reads, in one-letter code: Thiosulfate sulfurtransferase GlpE (107 aa).

The region spanning 17–101 is the Rhodanese domain; the sequence is AAGAARLVDI…GFEAWRREFP (85 aa). C65 serves as the catalytic Cysteine persulfide intermediate.

This sequence belongs to the GlpE family.

Its subcellular location is the cytoplasm. It catalyses the reaction thiosulfate + hydrogen cyanide = thiocyanate + sulfite + 2 H(+). It carries out the reaction thiosulfate + [thioredoxin]-dithiol = [thioredoxin]-disulfide + hydrogen sulfide + sulfite + 2 H(+). Functionally, transferase that catalyzes the transfer of sulfur from thiosulfate to thiophilic acceptors such as cyanide or dithiols. May function in a CysM-independent thiosulfate assimilation pathway by catalyzing the conversion of thiosulfate to sulfite, which can then be used for L-cysteine biosynthesis. This Aeromonas hydrophila subsp. hydrophila (strain ATCC 7966 / DSM 30187 / BCRC 13018 / CCUG 14551 / JCM 1027 / KCTC 2358 / NCIMB 9240 / NCTC 8049) protein is Thiosulfate sulfurtransferase GlpE.